The chain runs to 461 residues: Bifunctional protein GlmU (461 aa).

The segment at 1–234 (MSLSVVILAA…EIEVEGANNR (234 aa)) is pyrophosphorylase. UDP-N-acetyl-alpha-D-glucosamine is bound by residues 8–11 (LAAG), Lys-22, Gln-77, 82–83 (GT), 104–106 (YGD), Gly-141, Glu-159, Asn-174, and Asn-232. Asp-106 is a binding site for Mg(2+). Residue Asn-232 coordinates Mg(2+). Positions 235-255 (VQLATLERAYQARIAEELMIA) are linker. Positions 256–461 (GASLRDPARI…AGWQRPVKKS (206 aa)) are N-acetyltransferase. UDP-N-acetyl-alpha-D-glucosamine is bound by residues Arg-338 and Lys-356. Catalysis depends on His-368, which acts as the Proton acceptor. UDP-N-acetyl-alpha-D-glucosamine contacts are provided by Tyr-371 and Asn-382. Acetyl-CoA-binding positions include Ala-385, 391 to 392 (NY), Ser-410, Ala-428, and Arg-445.

This sequence in the N-terminal section; belongs to the N-acetylglucosamine-1-phosphate uridyltransferase family. The protein in the C-terminal section; belongs to the transferase hexapeptide repeat family. Homotrimer. Requires Mg(2+) as cofactor.

Its subcellular location is the cytoplasm. It carries out the reaction alpha-D-glucosamine 1-phosphate + acetyl-CoA = N-acetyl-alpha-D-glucosamine 1-phosphate + CoA + H(+). The enzyme catalyses N-acetyl-alpha-D-glucosamine 1-phosphate + UTP + H(+) = UDP-N-acetyl-alpha-D-glucosamine + diphosphate. Its pathway is nucleotide-sugar biosynthesis; UDP-N-acetyl-alpha-D-glucosamine biosynthesis; N-acetyl-alpha-D-glucosamine 1-phosphate from alpha-D-glucosamine 6-phosphate (route II): step 2/2. It participates in nucleotide-sugar biosynthesis; UDP-N-acetyl-alpha-D-glucosamine biosynthesis; UDP-N-acetyl-alpha-D-glucosamine from N-acetyl-alpha-D-glucosamine 1-phosphate: step 1/1. It functions in the pathway bacterial outer membrane biogenesis; LPS lipid A biosynthesis. Its function is as follows. Catalyzes the last two sequential reactions in the de novo biosynthetic pathway for UDP-N-acetylglucosamine (UDP-GlcNAc). The C-terminal domain catalyzes the transfer of acetyl group from acetyl coenzyme A to glucosamine-1-phosphate (GlcN-1-P) to produce N-acetylglucosamine-1-phosphate (GlcNAc-1-P), which is converted into UDP-GlcNAc by the transfer of uridine 5-monophosphate (from uridine 5-triphosphate), a reaction catalyzed by the N-terminal domain. The chain is Bifunctional protein GlmU from Colwellia psychrerythraea (strain 34H / ATCC BAA-681) (Vibrio psychroerythus).